We begin with the raw amino-acid sequence, 638 residues long: Phosphomethylpyrimidine synthase (638 aa).

Residues N233, M262, Y291, H327, 347–349 (SRG), 388–391 (DGLR), and E427 each bind substrate. H431 provides a ligand contact to Zn(2+). Residue Y454 participates in substrate binding. Zn(2+) is bound at residue H495. [4Fe-4S] cluster is bound by residues C575, C578, and C583.

This sequence belongs to the ThiC family. As to quaternary structure, homodimer. [4Fe-4S] cluster is required as a cofactor.

It carries out the reaction 5-amino-1-(5-phospho-beta-D-ribosyl)imidazole + S-adenosyl-L-methionine = 4-amino-2-methyl-5-(phosphooxymethyl)pyrimidine + CO + 5'-deoxyadenosine + formate + L-methionine + 3 H(+). The protein operates within cofactor biosynthesis; thiamine diphosphate biosynthesis. Its function is as follows. Catalyzes the synthesis of the hydroxymethylpyrimidine phosphate (HMP-P) moiety of thiamine from aminoimidazole ribotide (AIR) in a radical S-adenosyl-L-methionine (SAM)-dependent reaction. This chain is Phosphomethylpyrimidine synthase, found in Saccharophagus degradans (strain 2-40 / ATCC 43961 / DSM 17024).